A 382-amino-acid polypeptide reads, in one-letter code: Sulfate adenylyltransferase (382 aa).

The protein belongs to the sulfate adenylyltransferase family.

It catalyses the reaction sulfate + ATP + H(+) = adenosine 5'-phosphosulfate + diphosphate. It participates in sulfur metabolism; hydrogen sulfide biosynthesis; sulfite from sulfate: step 1/3. The polypeptide is Sulfate adenylyltransferase (Staphylothermus marinus (strain ATCC 43588 / DSM 3639 / JCM 9404 / F1)).